Consider the following 225-residue polypeptide: Probable septum site-determining protein MinC (225 aa).

This sequence belongs to the MinC family. In terms of assembly, interacts with MinD and FtsZ.

Cell division inhibitor that blocks the formation of polar Z ring septums. Rapidly oscillates between the poles of the cell to destabilize FtsZ filaments that have formed before they mature into polar Z rings. Prevents FtsZ polymerization. The polypeptide is Probable septum site-determining protein MinC (Listeria welshimeri serovar 6b (strain ATCC 35897 / DSM 20650 / CCUG 15529 / CIP 8149 / NCTC 11857 / SLCC 5334 / V8)).